The sequence spans 81 residues: Three-finger toxin A1 (81 aa).

A signal peptide spans 1-21; sequence MKTLLLTLVVVTIVCLDFGHT. Intrachain disulfides connect cysteine 24/cysteine 43, cysteine 38/cysteine 60, cysteine 62/cysteine 73, and cysteine 74/cysteine 79.

This sequence belongs to the three-finger toxin family. Short-chain subfamily. Type I alpha-neurotoxin sub-subfamily. In terms of tissue distribution, expressed by the venom gland.

It localises to the secreted. Functionally, binds and inhibits fetal (alpha-1-beta-1-gamma-delta/CHRNA1-CHRNB1-CHRNG-CHRND, IC(50)=1.4 nM), adult (alpha-1-beta-1-delta-epsilon/CHRNA1-CHRNB1-CHRND-CHRNE, IC(50)=12 nM) and neuronal alpha-7/CHRNA7 (IC(50)=400 nM) nicotinic acetylcholine receptors (nAChR) thereby impairing neuromuscular and neuronal transmissions. This chain is Three-finger toxin A1, found in Micrurus laticollaris (Balsas coral snake).